The following is a 367-amino-acid chain: Probable protein phosphatase 2C 67 (367 aa).

Residues 1-79 form a disordered region; the sequence is MAHQKREATS…DEKAATNSNV (79 aa). Over residues 31-46 the composition is skewed to basic and acidic residues; it reads AEKEHILTSDASHETN. The PPM-type phosphatase domain occupies 91–365; it reads EADAAEDKGC…DNCTAVLIVF (275 aa). 4 residues coordinate Mn(2+): aspartate 131, glycine 132, aspartate 312, and aspartate 356.

The protein belongs to the PP2C family. Mg(2+) serves as cofactor. Mn(2+) is required as a cofactor.

The enzyme catalyses O-phospho-L-seryl-[protein] + H2O = L-seryl-[protein] + phosphate. It catalyses the reaction O-phospho-L-threonyl-[protein] + H2O = L-threonyl-[protein] + phosphate. This chain is Probable protein phosphatase 2C 67, found in Oryza sativa subsp. japonica (Rice).